The chain runs to 951 residues: MLLVMVRSSTISPKSLRLYCSGHIIDSLRHSISRWNSPSGYCSNYYFSKRKHKRHFTSSVLSPVTPIVHNLFDELPERENRTMESSFMFLRDVLRSFMMRTETETPRSVHCFALKCGLLQDLATSSKLLTFYGRTGELVSSSCLFDELKEKDVIVWNSMITALNQNGRYIAAVGLFIEMIHKGNEFDSTTLLLAASALSSLHLSRKCSMLHCLAIETGLVGDSSLCNALMNLYAKGENLSSAECVFTHMEHRDIVSWNTIMTKCLANGHPRKSLQYFKSMTGSGQEADTVTFSCVISACSSIEELTLGESLHGLVIKSGYSPEAHVSVGNSIISMYSKCGDTEAAETVFEELVCRDVISSNAILNGFAANGMFEEAFGILNQMQSVDKIQPDIATVVSITSICGDLSFSREGRAVHGYTVRMEMQSRALEVINSVIDMYGKCGLTTQAELLFKTTTHRDLVSWNSMISAFSQNGFTHKAKNLFKEVVSEYSCSKFSLSTVLAILTSCDSSDSLIFGKSVHCWLQKLGFGDNMLSANSVINMYIGCRDLTSAFLRLETMSETRDLTSWNSVISGCASSGHHLESLRAFQAMSREGKIRHDLITLLGTISASGNLGLVLQGRCFHGLAIKSLRELDTQLQNTLITMYGRCKDIESAVKVFGLISDPNLCSWNCVISALSQNKAGREVFQLFRNLKLEPNEITFVGLLSASTQLGSTSYGMQAHCHLIRRGFQANPFVSAALVDMYSSCGMLETGMKVFRNSGVNSISAWNSVISAHGFHGMGEKAMELFKELSSNSEMEPNKSSFISLLSACSHSGFIDEGLSYYKQMEEKFGVKPVTEHRVWIVDMLGRAGKLREAYEFITGIGEPQKAGVWGALLSACNYHGDTKLGKEVAEVLFEMEPDNASYYISLANTYVGLGGWEEAVRLRKMVEDNALKKLPGYSVIDVRCLDTVS.

The N-terminal 63 residues, 1–63, are a transit peptide targeting the mitochondrion; the sequence is MLLVMVRSST…RHFTSSVLSP (63 aa). PPR repeat units lie at residues 121-151, 152-186, 187-221, 222-252, 253-287, 288-322, 325-355, 356-386, 392-426, 428-458, 459-489, 496-530, 531-561, 563-597, 599-629, 634-668, 669-695, 697-731, 732-762, 763-793, 799-829, and 835-865; these read DLAT…LKEK, DVIV…GNEF, DSTT…GLVG, DSSL…MEHR, DIVS…GQEA, DTVT…GYSP, HVSV…LVCR, DVIS…MQSV, DIAT…EMQS, ALEV…TTHR, DLVS…VVSE, SLST…GFGD, NMLS…MSET, DLTS…GKIR, DLIT…AIKS, DTQL…NLCS, WNCV…LKLE, NEIT…GFQA, NPFV…SGVN, SISA…LSSN, NKSS…MEEK, and VTEH…IGEP. Residues 870 to 945 are type E motif; sequence VWGALLSACN…LPGYSVIDVR (76 aa).

Belongs to the PPR family. PCMP-E subfamily.

It is found in the mitochondrion. The sequence is that of Pentatricopeptide repeat-containing protein At4g19220, mitochondrial (PCMP-E2) from Arabidopsis thaliana (Mouse-ear cress).